Here is a 406-residue protein sequence, read N- to C-terminus: Arginine deiminase (406 aa).

Cysteine 396 serves as the catalytic Amidino-cysteine intermediate.

This sequence belongs to the arginine deiminase family.

The protein resides in the cytoplasm. The catalysed reaction is L-arginine + H2O = L-citrulline + NH4(+). The protein operates within amino-acid degradation; L-arginine degradation via ADI pathway; carbamoyl phosphate from L-arginine: step 1/2. In Vibrio campbellii (strain ATCC BAA-1116), this protein is Arginine deiminase.